We begin with the raw amino-acid sequence, 506 residues long: Acetaldehyde dehydrogenase 2 (506 aa).

240–245 (GETTTG) serves as a coordination point for NAD(+). Catalysis depends on residues Glu-262 and Cys-301.

This sequence belongs to the aldehyde dehydrogenase family.

The catalysed reaction is an aldehyde + NAD(+) + H2O = a carboxylate + NADH + 2 H(+). It functions in the pathway alcohol metabolism; ethanol degradation; acetate from ethanol: step 2/2. The protein operates within ketone degradation; acetoin degradation. Its function is as follows. Involved in the catabolism of acetoin and ethanol. The sequence is that of Acetaldehyde dehydrogenase 2 (acoD) from Cupriavidus necator (strain ATCC 17699 / DSM 428 / KCTC 22496 / NCIMB 10442 / H16 / Stanier 337) (Ralstonia eutropha).